The following is a 314-amino-acid chain: DNA-directed RNA polymerase subunit alpha (314 aa).

An alpha N-terminal domain (alpha-NTD) region spans residues 1–227; that stretch reads MTYFQIECVE…SLFYPLTNLN (227 aa). An alpha C-terminal domain (alpha-CTD) region spans residues 239 to 314; that stretch reads EEEINQVLIE…LPKEKNIQNT (76 aa).

It belongs to the RNA polymerase alpha chain family. As to quaternary structure, in plastids the minimal PEP RNA polymerase catalytic core is composed of four subunits: alpha, beta, beta', and beta''. When a (nuclear-encoded) sigma factor is associated with the core the holoenzyme is formed, which can initiate transcription.

It localises to the plastid. Its subcellular location is the chloroplast. It catalyses the reaction RNA(n) + a ribonucleoside 5'-triphosphate = RNA(n+1) + diphosphate. Functionally, DNA-dependent RNA polymerase catalyzes the transcription of DNA into RNA using the four ribonucleoside triphosphates as substrates. In Gracilaria tenuistipitata var. liui (Red alga), this protein is DNA-directed RNA polymerase subunit alpha.